The sequence spans 270 residues: Putative phosphoenolpyruvate synthase regulatory protein (270 aa).

150–157 contacts ADP; the sequence is GVSRCGKT.

The protein belongs to the pyruvate, phosphate/water dikinase regulatory protein family. PSRP subfamily.

The enzyme catalyses [pyruvate, water dikinase] + ADP = [pyruvate, water dikinase]-phosphate + AMP + H(+). It catalyses the reaction [pyruvate, water dikinase]-phosphate + phosphate + H(+) = [pyruvate, water dikinase] + diphosphate. Its function is as follows. Bifunctional serine/threonine kinase and phosphorylase involved in the regulation of the phosphoenolpyruvate synthase (PEPS) by catalyzing its phosphorylation/dephosphorylation. The sequence is that of Putative phosphoenolpyruvate synthase regulatory protein from Shewanella pealeana (strain ATCC 700345 / ANG-SQ1).